The sequence spans 108 residues: UPF0102 protein Shewmr4_3685 (108 aa).

The protein belongs to the UPF0102 family.

This Shewanella sp. (strain MR-4) protein is UPF0102 protein Shewmr4_3685.